Reading from the N-terminus, the 161-residue chain is Ubiquitin D (161 aa).

2 Ubiquitin-like domains span residues 3-77 (SCVC…LKVV) and 86-159 (LSLV…AHCI).

This sequence belongs to the ubiquitin D family. As to quaternary structure, interacts directly with the 26S proteasome. Interacts with NUB1; this interaction facilitates the linking of UBD-conjugated target protein to the proteasome complex and accelerates its own degradation and that of its conjugates. Interacts (via ubiquitin-like 1 domain) with the spindle checkpoint protein MAD2L1 during mitosis. Present in aggresomes of proteasome inhibited cells. Interacts with HDAC6 under proteasome impairment conditions. Forms a thioester with UBA6 in cells stimulated with tumor necrosis factor-alpha (TNFa) and interferon-gamma (IFNg). Interacts with SQSTM1 and TP53/p53. Post-translationally, can be acetylated.

The protein localises to the nucleus. It localises to the cytoplasm. In terms of biological role, ubiquitin-like protein modifier which can be covalently attached to target proteins and subsequently leads to their degradation by the 26S proteasome, in a NUB1-dependent manner. Conjugation to the target protein is activated by UBA6 via adenylation of its C-terminal glycine. Probably functions as a survival factor. Promotes the expression of the proteasome subunit beta type-9 (PSMB9/LMP2). Regulates TNF-alpha-induced and LPS-mediated activation of the central mediator of innate immunity NF-kappa-B by promoting TNF-alpha-mediated proteasomal degradation of ubiquitinated-I-kappa-B-alpha. Required for TNF-alpha-induced p65 nuclear translocation in renal tubular epithelial cells (RTECs). May be involved in dendritic cell (DC) maturation, the process by which immature dendritic cells differentiate into fully competent antigen-presenting cells that initiate T-cell responses. Mediates mitotic non-disjunction and chromosome instability, in long-term in vitro culture and cancers, by abbreviating mitotic phase and impairing the kinetochore localization of MAD2L1 during the prometaphase stage of the cell cycle. May be involved in the formation of aggresomes when proteasome is saturated or impaired. Mediates apoptosis in a caspase-dependent manner, especially in renal epithelium and tubular cells during renal diseases. The protein is Ubiquitin D (Ubd) of Rattus norvegicus (Rat).